We begin with the raw amino-acid sequence, 540 residues long: Aquaporin-5 (540 aa).

The disordered stretch occupies residues 1–224 (MSGEGTDLPT…ESIDGYNYES (224 aa)). Residues 1–263 (MSGEGTDLPT…QWMNSNFKNH (263 aa)) lie on the Cytoplasmic side of the membrane. The span at 25 to 44 (PGSSQQQLVPIAHTISSPSK) shows a compositional bias: polar residues. 4 stretches are compositionally biased toward basic and acidic residues: residues 119–133 (RARE…EREN), 140–155 (RARD…ERSR), 174–194 (YFDD…KGMR), and 204–214 (SGEKVRRKSTD). The chain crosses the membrane as a helical span at residues 264–284 (FVATIGEFVGTTMFLFFAFAG). Topologically, residues 285–308 (TQVANIDSNTVNTTTGAATGFNIA) are extracellular. Asn-296 is a glycosylation site (N-linked (GlcNAc...) asparagine). The helical transmembrane segment at 309 to 329 (VQLYIAVIFGFSLMVNVWIFF) threads the bilayer. Residues 330–332 (RIS) are Cytoplasmic-facing. Residues 333 to 353 (GGLFNPAVTLGMVLVGAIPIP) traverse the membrane as a helical segment. The Extracellular portion of the chain corresponds to 354 to 356 (RAA). Residues 357-377 (CLFFAQILGGIAASGMVLGLF) traverse the membrane as a helical segment. Residues 378–393 (PTTFNVRTTLGASTST) lie on the Cytoplasmic side of the membrane. Residues 394-414 (VQGVFIEAILTAELVFTIFML) traverse the membrane as a helical segment. The Extracellular segment spans residues 415–420 (AKEKHK). A helical transmembrane segment spans residues 421–441 (ATFIAPVGIGLALFIAEMVGV). Residues 442-467 (YYTGGSLNPARSFGPCVVSGSFDKEH) are Cytoplasmic-facing. A helical membrane pass occupies residues 468 to 488 (WIYWIGPITGTFIAVFFYKFI). Residues 489 to 540 (KMLEYEMANPGQDGDAKNDPTQNEKKREQILEERNRRYEKRNGSLRPGSRLS) are Extracellular-facing. The segment at 499–540 (GQDGDAKNDPTQNEKKREQILEERNRRYEKRNGSLRPGSRLS) is disordered. The segment covering 502–530 (GDAKNDPTQNEKKREQILEERNRRYEKRN) has biased composition (basic and acidic residues). Asn-530 carries N-linked (GlcNAc...) asparagine glycosylation.

It belongs to the MIP/aquaporin (TC 1.A.8) family.

Its subcellular location is the membrane. The enzyme catalyses H2O(in) = H2O(out). Its function is as follows. Water channel required to facilitate the transport of water across membranes. May play a role in the vegetative growth. The sequence is that of Aquaporin-5 from Botryotinia fuckeliana (strain B05.10) (Noble rot fungus).